A 349-amino-acid chain; its full sequence is Quinolinate synthase (349 aa).

Iminosuccinate contacts are provided by His-52 and Ser-69. Cys-114 serves as a coordination point for [4Fe-4S] cluster. Iminosuccinate contacts are provided by residues 140 to 142 and Ser-157; that span reads YFN. Residue Cys-201 coordinates [4Fe-4S] cluster. Iminosuccinate-binding positions include 227–229 and Thr-255; that span reads HPE. Residue Cys-300 coordinates [4Fe-4S] cluster.

It belongs to the quinolinate synthase family. Type 2 subfamily. [4Fe-4S] cluster serves as cofactor.

The protein resides in the cytoplasm. It catalyses the reaction iminosuccinate + dihydroxyacetone phosphate = quinolinate + phosphate + 2 H2O + H(+). It functions in the pathway cofactor biosynthesis; NAD(+) biosynthesis; quinolinate from iminoaspartate: step 1/1. Its function is as follows. Catalyzes the condensation of iminoaspartate with dihydroxyacetone phosphate to form quinolinate. The chain is Quinolinate synthase from Mycolicibacterium paratuberculosis (strain ATCC BAA-968 / K-10) (Mycobacterium paratuberculosis).